The primary structure comprises 350 residues: Putative isomerase YbhH (350 aa).

It belongs to the PrpF family.

This is Putative isomerase YbhH (ybhH) from Escherichia coli O6:H1 (strain CFT073 / ATCC 700928 / UPEC).